Consider the following 93-residue polypeptide: Putative pterin-4-alpha-carbinolamine dehydratase (93 aa).

It belongs to the pterin-4-alpha-carbinolamine dehydratase family.

It catalyses the reaction (4aS,6R)-4a-hydroxy-L-erythro-5,6,7,8-tetrahydrobiopterin = (6R)-L-erythro-6,7-dihydrobiopterin + H2O. The protein is Putative pterin-4-alpha-carbinolamine dehydratase of Thermomicrobium roseum (strain ATCC 27502 / DSM 5159 / P-2).